Consider the following 426-residue polypeptide: Glutamate-1-semialdehyde 2,1-aminomutase (426 aa).

K265 carries the post-translational modification N6-(pyridoxal phosphate)lysine.

This sequence belongs to the class-III pyridoxal-phosphate-dependent aminotransferase family. HemL subfamily. As to quaternary structure, homodimer. Requires pyridoxal 5'-phosphate as cofactor.

It localises to the cytoplasm. The catalysed reaction is (S)-4-amino-5-oxopentanoate = 5-aminolevulinate. Its pathway is porphyrin-containing compound metabolism; protoporphyrin-IX biosynthesis; 5-aminolevulinate from L-glutamyl-tRNA(Glu): step 2/2. This chain is Glutamate-1-semialdehyde 2,1-aminomutase, found in Escherichia coli O81 (strain ED1a).